Here is a 231-residue protein sequence, read N- to C-terminus: Very-long-chain (3R)-3-hydroxyacyl-CoA dehydratase 4 (231 aa).

Topologically, residues 1 to 19 (MGPVALPTWLQPRYRKNAY) are cytoplasmic. Residues 20–40 (LFIYYLIQFCGHSWIFTNMTV) form a helical membrane-spanning segment. The Lumenal portion of the chain corresponds to 41–56 (RFFSFGKDSMVDTFYA). A helical transmembrane segment spans residues 57–77 (IGLVMQLCQSISLLELLHIYV). Residues 78–112 (GIESNHLLPRILQLTERIIVLFMVITSQEEVQEKY) lie on the Cytoplasmic side of the membrane. The helical transmembrane segment at 113–133 (VVCVLFIFRNLLDMVRYTYSM) threads the bilayer. Residues 134–135 (LS) are Lumenal-facing. A helical transmembrane segment spans residues 136-156 (VIGISYAVLTWFSQTLWMPIY). The active site involves Tyr156. Position 157 (Pro157) is a topological domain, cytoplasmic. The chain crosses the membrane as a helical span at residues 158-178 (LCVLAEAFTIYQSLPYFESFG). Residue Glu163 is part of the active site. Over 179 to 189 (TYSTKLPFDLS) the chain is Lumenal. The chain crosses the membrane as a helical span at residues 190–210 (FYFPYVLKIYLMMLFVGMYFT). The Cytoplasmic segment spans residues 211–231 (YNHLYSERRDILRVFPNKKKM).

The protein belongs to the very long-chain fatty acids dehydratase HACD family. In terms of assembly, may interact with enzymes of the ELO family (including ELOVL1); with those enzymes that mediate condensation, the first of the four steps of the reaction cycle responsible for fatty acids elongation, may be part of a larger fatty acids elongase complex.

The protein resides in the endoplasmic reticulum membrane. The catalysed reaction is a very-long-chain (3R)-3-hydroxyacyl-CoA = a very-long-chain (2E)-enoyl-CoA + H2O. It catalyses the reaction (3R)-hydroxyhexadecanoyl-CoA = (2E)-hexadecenoyl-CoA + H2O. It functions in the pathway lipid metabolism; fatty acid biosynthesis. Functionally, catalyzes the third of the four reactions of the long-chain fatty acids elongation cycle. This endoplasmic reticulum-bound enzymatic process, allows the addition of two carbons to the chain of long- and very long-chain fatty acids/VLCFAs per cycle. This enzyme catalyzes the dehydration of the 3-hydroxyacyl-CoA intermediate into trans-2,3-enoyl-CoA, within each cycle of fatty acid elongation. Thereby, it participates in the production of VLCFAs of different chain lengths that are involved in multiple biological processes as precursors of membrane lipids and lipid mediators. The protein is Very-long-chain (3R)-3-hydroxyacyl-CoA dehydratase 4 of Bos taurus (Bovine).